The following is a 306-amino-acid chain: Ribonuclease Z (306 aa).

The Zn(2+) site is built by His63, His65, Asp67, His68, His141, Asp211, and His269. Asp67 acts as the Proton acceptor in catalysis.

This sequence belongs to the RNase Z family. In terms of assembly, homodimer. Requires Zn(2+) as cofactor.

The catalysed reaction is Endonucleolytic cleavage of RNA, removing extra 3' nucleotides from tRNA precursor, generating 3' termini of tRNAs. A 3'-hydroxy group is left at the tRNA terminus and a 5'-phosphoryl group is left at the trailer molecule.. In terms of biological role, zinc phosphodiesterase, which displays some tRNA 3'-processing endonuclease activity. Probably involved in tRNA maturation, by removing a 3'-trailer from precursor tRNA. In Staphylococcus aureus (strain Mu3 / ATCC 700698), this protein is Ribonuclease Z.